The following is a 183-amino-acid chain: Probable chemoreceptor glutamine deamidase CheD (183 aa).

The protein belongs to the CheD family.

It catalyses the reaction L-glutaminyl-[protein] + H2O = L-glutamyl-[protein] + NH4(+). Its function is as follows. Probably deamidates glutamine residues to glutamate on methyl-accepting chemotaxis receptors (MCPs), playing an important role in chemotaxis. In Sinorhizobium medicae (strain WSM419) (Ensifer medicae), this protein is Probable chemoreceptor glutamine deamidase CheD.